Here is a 405-residue protein sequence, read N- to C-terminus: Amino sugar nitrososynthase DnmZ (405 aa).

DTDP contacts are provided by glutamate 117 and arginine 332.

The protein belongs to the acyl-CoA dehydrogenase family. Homotetramer. Requires FAD as cofactor.

Its pathway is antibiotic biosynthesis. In terms of biological role, nitrososynthase involved in the biosynthesis of baumycin. Catalyzes the double-oxidation of TDP-L-epi-vancosamine to TDP-L-epi-vancosonitrose. The rapid turnover of TDP-L-epi-vancosamine suggests that this compound, or a closely related analog, is the natural substrate for DnmZ. Can also catalyze the double-oxidation of TDP-L-evernosamine to TDP-L-evernitrosose. The protein is Amino sugar nitrososynthase DnmZ of Streptomyces peucetius.